The sequence spans 420 residues: Glucose-1-phosphate adenylyltransferase (420 aa).

Alpha-D-glucose 1-phosphate is bound by residues tyrosine 107, glycine 172, glutamate 187–lysine 188, and serine 205.

This sequence belongs to the bacterial/plant glucose-1-phosphate adenylyltransferase family. As to quaternary structure, homotetramer.

The enzyme catalyses alpha-D-glucose 1-phosphate + ATP + H(+) = ADP-alpha-D-glucose + diphosphate. The protein operates within glycan biosynthesis; glycogen biosynthesis. Its function is as follows. Involved in the biosynthesis of ADP-glucose, a building block required for the elongation reactions to produce glycogen. Catalyzes the reaction between ATP and alpha-D-glucose 1-phosphate (G1P) to produce pyrophosphate and ADP-Glc. This is Glucose-1-phosphate adenylyltransferase from Rhizobium meliloti (strain 1021) (Ensifer meliloti).